The primary structure comprises 476 residues: Glycogen synthase (476 aa).

Residue Lys15 coordinates ADP-alpha-D-glucose.

Belongs to the glycosyltransferase 1 family. Bacterial/plant glycogen synthase subfamily.

It carries out the reaction [(1-&gt;4)-alpha-D-glucosyl](n) + ADP-alpha-D-glucose = [(1-&gt;4)-alpha-D-glucosyl](n+1) + ADP + H(+). Its pathway is glycan biosynthesis; glycogen biosynthesis. In terms of biological role, synthesizes alpha-1,4-glucan chains using ADP-glucose. The chain is Glycogen synthase from Mycoplasma mobile (strain ATCC 43663 / 163K / NCTC 11711) (Mesomycoplasma mobile).